Reading from the N-terminus, the 298-residue chain is Lipoyl synthase (298 aa).

The [4Fe-4S] cluster site is built by Cys-40, Cys-45, Cys-51, Cys-67, Cys-71, Cys-74, and Ser-280. In terms of domain architecture, Radical SAM core spans 53–269 (AVRRTATFMI…KEIALSKGFS (217 aa)).

Belongs to the radical SAM superfamily. Lipoyl synthase family. Requires [4Fe-4S] cluster as cofactor.

It is found in the cytoplasm. It carries out the reaction [[Fe-S] cluster scaffold protein carrying a second [4Fe-4S](2+) cluster] + N(6)-octanoyl-L-lysyl-[protein] + 2 oxidized [2Fe-2S]-[ferredoxin] + 2 S-adenosyl-L-methionine + 4 H(+) = [[Fe-S] cluster scaffold protein] + N(6)-[(R)-dihydrolipoyl]-L-lysyl-[protein] + 4 Fe(3+) + 2 hydrogen sulfide + 2 5'-deoxyadenosine + 2 L-methionine + 2 reduced [2Fe-2S]-[ferredoxin]. It functions in the pathway protein modification; protein lipoylation via endogenous pathway; protein N(6)-(lipoyl)lysine from octanoyl-[acyl-carrier-protein]. Catalyzes the radical-mediated insertion of two sulfur atoms into the C-6 and C-8 positions of the octanoyl moiety bound to the lipoyl domains of lipoate-dependent enzymes, thereby converting the octanoylated domains into lipoylated derivatives. The chain is Lipoyl synthase from Geobacillus thermodenitrificans (strain NG80-2).